Reading from the N-terminus, the 236-residue chain is Three prime repair exonuclease 2 (236 aa).

Residues aspartate 14 and glutamate 16 each contribute to the Mg(2+) site. Residues 16–17 (EA) and tyrosine 122 each bind substrate. Histidine 188 (proton donor/acceptor) is an active-site residue. Aspartate 193 contributes to the Mg(2+) binding site. Position 193 (aspartate 193) interacts with substrate.

The protein belongs to the exonuclease superfamily. TREX family. As to quaternary structure, homodimer. The cofactor is Mg(2+).

The protein resides in the nucleus. The catalysed reaction is Exonucleolytic cleavage in the 3'- to 5'-direction to yield nucleoside 5'-phosphates.. Functionally, exonuclease with a preference for double-stranded DNA with mismatched 3' termini. May play a role in DNA repair. The sequence is that of Three prime repair exonuclease 2 (Trex2) from Mus musculus (Mouse).